Reading from the N-terminus, the 366-residue chain is Endophilin-A (366 aa).

Positions 18-248 constitute a BAR domain; it reads TEKMGGAEGT…LQEKRSEAES (231 aa). Positions 227-247 form a coiled coil; it reads QCADVLRGLQETLQEKRSEAE. Positions 266 to 295 are disordered; sequence GGGGGLNEDGTPSHISSSASPLPSPMRSPA. Over residues 277–294 the composition is skewed to low complexity; that stretch reads PSHISSSASPLPSPMRSP. The 60-residue stretch at 305–364 folds into the SH3 domain; the sequence is QQQPCCQALYDFDPENPGELGFKENDIITLLNRVDDNWYEGSVNGRTGYFPQSYVQVQVP.

The protein belongs to the endophilin family.

The protein resides in the cytoplasm. It is found in the membrane. In terms of biological role, required presynaptically at the neuromuscular junction. Implicated in synaptic vesicle endocytosis. The protein is Endophilin-A of Drosophila willistoni (Fruit fly).